Consider the following 452-residue polypeptide: UPF0210 protein Dred_1672 (452 aa).

This sequence belongs to the UPF0210 family. As to quaternary structure, homodimer.

The protein is UPF0210 protein Dred_1672 of Desulforamulus reducens (strain ATCC BAA-1160 / DSM 100696 / MI-1) (Desulfotomaculum reducens).